The chain runs to 540 residues: MLYRKPITVCLASCSVQETHGSACDVSSIAYDSRAVREGSVFFALRGTHAHGAQYIHAAIDAGACAIVHDCPLDTYVVGVYYARVPDARCALSSAAAAFYDFPTRALTVIGVTGTEGKSSTVSFIAQLLRLCGKRVGFISTVEYSLGDDILPNAEHQTTPESLTVQRLLAEMREHSCEFAVIEASSHGLSTRTARLQDVAFDVAVCMNVRHEHLEFHGSFEQYRFDKANVFRALDAHDHIKDGRRVPSFGVLWAEDASAVYFREATHKPCFFFKRGTGAEQRTAACLERMPCTLLWVQTLPQISQALRLRFVLSTVQEPAQPAQDGAHDVSVPLEGAFNACNIAASFLVLHGLLGTSLAAFAQHVQYVQPIQGRMQRVDMGQDFEVLIDYAHTPSSFEEILPPLAARVRARKRRMLVLFGSAGERDTQKRAMQGAIASRYAHVIVLTDEDPRGEDPMGILCMIAAGCEHKKLGKTLFLIPDRVAALRHIFSLARAQDLVLLLGKGHEHSIIYAHTVQPYDEERTARELLRASLSSDTLLS.

Residue Ser-33 coordinates UDP-N-acetyl-alpha-D-muramoyl-L-alanyl-D-glutamate. Residue 114–120 participates in ATP binding; sequence GTEGKSS. UDP-N-acetyl-alpha-D-muramoyl-L-alanyl-D-glutamate contacts are provided by residues 158 to 159, Ser-185, and Arg-195; that span reads TT. Lys-227 carries the post-translational modification N6-carboxylysine.

The protein belongs to the MurCDEF family. MurE subfamily. Carboxylation is probably crucial for Mg(2+) binding and, consequently, for the gamma-phosphate positioning of ATP.

It localises to the cytoplasm. It participates in cell wall biogenesis; peptidoglycan biosynthesis. Catalyzes the addition of an amino acid to the nucleotide precursor UDP-N-acetylmuramoyl-L-alanyl-D-glutamate (UMAG) in the biosynthesis of bacterial cell-wall peptidoglycan. The protein is UDP-N-acetylmuramyl-tripeptide synthetase of Treponema pallidum (strain Nichols).